We begin with the raw amino-acid sequence, 314 residues long: MRPLTIIGPTGTGKSDSAIEIADRLSSKIAVEIVNADAYQLYRGMDIGTGKVPLAQRRGIPHHQLDVLDVTETATVAGYQRSAAADIEAIASRGALPLLVGGSMLYVQSLLDDWAFPAKDPAIRARWERRLAQVGPARLHADLVRRDPAAAAVIPLNDARRTVRALEVVEITGRPYAASAPRIGSPRWDSAIIGLDCETKVLDERLAARTKAMFDRGLIEEVISLLPCGLARGVTASRALGYAQVMEALKAGADTQALDRARQQTCLATRRYVRRQRSWFRRDRRVRWLDATVSTAAHRTAIIEAVLGAWRRAS.

8–15 (GPTGTGKS) contributes to the ATP binding site. Residue 10–15 (TGTGKS) participates in substrate binding.

This sequence belongs to the IPP transferase family. As to quaternary structure, monomer. The cofactor is Mg(2+).

It catalyses the reaction adenosine(37) in tRNA + dimethylallyl diphosphate = N(6)-dimethylallyladenosine(37) in tRNA + diphosphate. Catalyzes the transfer of a dimethylallyl group onto the adenine at position 37 in tRNAs that read codons beginning with uridine, leading to the formation of N6-(dimethylallyl)adenosine (i(6)A). The protein is tRNA dimethylallyltransferase 2 of Mycobacterium ulcerans (strain Agy99).